The sequence spans 162 residues: Large ribosomal subunit protein bL9 (162 aa).

Belongs to the bacterial ribosomal protein bL9 family.

Functionally, binds to the 23S rRNA. In Chlorobaculum parvum (strain DSM 263 / NCIMB 8327) (Chlorobium vibrioforme subsp. thiosulfatophilum), this protein is Large ribosomal subunit protein bL9.